We begin with the raw amino-acid sequence, 549 residues long: Eukaryotic translation initiation factor 3 subunit D-2 (549 aa).

The segment at 107–157 (ARVKGRSGRGPGMLGVAGSMAGGGTTSGSTKYGKGRESRRNQGRRFARNAP) is disordered. Residues 114 to 132 (GRGPGMLGVAGSMAGGGTT) show a composition bias toward gly residues. Residues 288–302 (QFDLLTVNETSLEPP) are RNA gate. The tract at residues 527 to 549 (NSFDSDAEDEENSSEPFANSLDN) is disordered. The segment covering 529 to 539 (FDSDAEDEENS) has biased composition (acidic residues).

Belongs to the eIF-3 subunit D family. In terms of assembly, component of the eukaryotic translation initiation factor 3 (eIF-3) complex. The eIF-3 complex interacts with pix.

The protein localises to the cytoplasm. Functionally, mRNA cap-binding component of the eukaryotic translation initiation factor 3 (eIF-3) complex, which is involved in protein synthesis of a specialized repertoire of mRNAs and, together with other initiation factors, stimulates binding of mRNA and methionyl-tRNAi to the 40S ribosome. The eIF-3 complex specifically targets and initiates translation of a subset of mRNAs involved in cell proliferation. In the eIF-3 complex, eif3d specifically recognizes and binds the 7-methylguanosine cap of a subset of mRNAs. This chain is Eukaryotic translation initiation factor 3 subunit D-2, found in Drosophila ananassae (Fruit fly).